The sequence spans 427 residues: 3-phosphoshikimate 1-carboxyvinyltransferase (427 aa).

Residues Lys-22, Ser-23, and Arg-27 each contribute to the 3-phosphoshikimate site. Lys-22 contributes to the phosphoenolpyruvate binding site. Residues Gly-96 and Arg-124 each coordinate phosphoenolpyruvate. 3-phosphoshikimate is bound by residues Ser-169, Ser-170, Gln-171, Ser-197, Asp-313, Asn-336, and Lys-340. Gln-171 is a binding site for phosphoenolpyruvate. Residue Asp-313 is the Proton acceptor of the active site. Positions 344, 386, and 411 each coordinate phosphoenolpyruvate.

It belongs to the EPSP synthase family. As to quaternary structure, monomer.

It localises to the cytoplasm. It carries out the reaction 3-phosphoshikimate + phosphoenolpyruvate = 5-O-(1-carboxyvinyl)-3-phosphoshikimate + phosphate. Its pathway is metabolic intermediate biosynthesis; chorismate biosynthesis; chorismate from D-erythrose 4-phosphate and phosphoenolpyruvate: step 6/7. Its function is as follows. Catalyzes the transfer of the enolpyruvyl moiety of phosphoenolpyruvate (PEP) to the 5-hydroxyl of shikimate-3-phosphate (S3P) to produce enolpyruvyl shikimate-3-phosphate and inorganic phosphate. The protein is 3-phosphoshikimate 1-carboxyvinyltransferase of Escherichia coli O8 (strain IAI1).